The primary structure comprises 98 residues: Hainantoxin-XVII.2 (98 aa).

An N-terminal signal peptide occupies residues 1–40; sequence MTTVGVSLFRRSPEKITMKIAAFLGLSFLLIASYVLICEA. Residues 41–64 constitute a propeptide that is removed on maturation; the sequence is QHPGFQELLILEENMRDPENSKER. Intrachain disulfides connect C66-C81, C73-C85, and C80-C95.

The protein belongs to the hainantoxin family. 17 subfamily. As to expression, expressed by the venom gland.

The protein resides in the secreted. Functionally, putative ion channel inhibitor. In Cyriopagopus hainanus (Chinese bird spider), this protein is Hainantoxin-XVII.2.